The primary structure comprises 176 residues: NADH-quinone oxidoreductase subunit I 2 (176 aa).

2 4Fe-4S ferredoxin-type domains span residues 45–77 and 87–116; these read IVLT…MEAA and RWFR…MTPD. Positions 57, 60, 63, 67, 96, 99, 102, and 106 each coordinate [4Fe-4S] cluster.

It belongs to the complex I 23 kDa subunit family. NDH-1 is composed of 14 different subunits. Subunits NuoA, H, J, K, L, M, N constitute the membrane sector of the complex. [4Fe-4S] cluster serves as cofactor.

Its subcellular location is the cell inner membrane. It carries out the reaction a quinone + NADH + 5 H(+)(in) = a quinol + NAD(+) + 4 H(+)(out). NDH-1 shuttles electrons from NADH, via FMN and iron-sulfur (Fe-S) centers, to quinones in the respiratory chain. The immediate electron acceptor for the enzyme in this species is believed to be ubiquinone. Couples the redox reaction to proton translocation (for every two electrons transferred, four hydrogen ions are translocated across the cytoplasmic membrane), and thus conserves the redox energy in a proton gradient. This Geobacter sulfurreducens (strain ATCC 51573 / DSM 12127 / PCA) protein is NADH-quinone oxidoreductase subunit I 2.